A 491-amino-acid polypeptide reads, in one-letter code: MNTQQLAKLRSIVPEMRRVRHIHFVGIGGAGMGGIAEVLANEGYQISGSDLAPNPVTQQLMNLGATIYFNHRPENVRDASVVVVSSAISADNPEIVAAHEARIPVIRRAEMLAELMRFRHGIAIAGTHGKTTTTAMVSSIYAEAGLDPTFVNGGLVKAAGVHARLGHGRYLIAEADESDASFLHLQPMVAIVTNIEADHMDTYQGDFENLKQTFINFLHNLPFYGRAVMCVDDPVIRELLPRVGRQTTTYGFSEDADVRVEDYQQIGPQGHFTLLRQDKEPMRVTLNAPGRHNALNAAAAVAVATEEGIDDEAILRALESFQGTGRRFDFLGEFPLEPVNGKSGTAMLVDDYGHHPTEVDATIKAARAGWPDKNLVMLFQPHRFTRTRDLYDDFANVLTQVDTLLMLEVYPAGEAPIPGADSRSLCRTIRGRGKIDPILVPDPAQVAEMLAPVLTGNDLILVQGAGNIGKIARSLAEIKLKPQTPEEEQHD.

Residue 126-132 (GTHGKTT) coordinates ATP.

This sequence belongs to the MurCDEF family.

The protein resides in the cytoplasm. The enzyme catalyses UDP-N-acetyl-alpha-D-muramate + L-alanine + ATP = UDP-N-acetyl-alpha-D-muramoyl-L-alanine + ADP + phosphate + H(+). It functions in the pathway cell wall biogenesis; peptidoglycan biosynthesis. Its function is as follows. Cell wall formation. This Escherichia coli (strain SMS-3-5 / SECEC) protein is UDP-N-acetylmuramate--L-alanine ligase.